The sequence spans 656 residues: uncharacterized protein (656 aa).

The segment at E623–R656 is disordered. Over residues T645–R656 the composition is skewed to basic and acidic residues.

This is an uncharacterized protein from Mycobacterium tuberculosis (strain ATCC 25618 / H37Rv).